The sequence spans 283 residues: 4-diphosphocytidyl-2-C-methyl-D-erythritol kinase (283 aa).

Residue Lys10 is part of the active site. An ATP-binding site is contributed by 99–109; that stretch reads PMGGGLGGGSS. Asp141 is an active-site residue.

This sequence belongs to the GHMP kinase family. IspE subfamily. In terms of assembly, homodimer.

It catalyses the reaction 4-CDP-2-C-methyl-D-erythritol + ATP = 4-CDP-2-C-methyl-D-erythritol 2-phosphate + ADP + H(+). It functions in the pathway isoprenoid biosynthesis; isopentenyl diphosphate biosynthesis via DXP pathway; isopentenyl diphosphate from 1-deoxy-D-xylulose 5-phosphate: step 3/6. Functionally, catalyzes the phosphorylation of the position 2 hydroxy group of 4-diphosphocytidyl-2C-methyl-D-erythritol. The protein is 4-diphosphocytidyl-2-C-methyl-D-erythritol kinase of Salmonella gallinarum (strain 287/91 / NCTC 13346).